The primary structure comprises 447 residues: Tubulin beta-2 chain (447 aa).

The GTP site is built by Gln9, Glu67, Ser136, Gly140, Thr141, Gly142, Asn202, and Asn224. Glu67 is a binding site for Mg(2+). A compositionally biased stretch (polar residues) spans 411 to 425; that stretch reads SNMNDLVSEYQQYQD. The interval 411 to 447 is disordered; the sequence is SNMNDLVSEYQQYQDATAEEDEYEEEEEDYHQEHDEM. A compositionally biased stretch (acidic residues) spans 427 to 440; sequence TAEEDEYEEEEEDY.

Belongs to the tubulin family. Dimer of alpha and beta chains. A typical microtubule is a hollow water-filled tube with an outer diameter of 25 nm and an inner diameter of 15 nM. Alpha-beta heterodimers associate head-to-tail to form protofilaments running lengthwise along the microtubule wall with the beta-tubulin subunit facing the microtubule plus end conferring a structural polarity. Microtubules usually have 13 protofilaments but different protofilament numbers can be found in some organisms and specialized cells. It depends on Mg(2+) as a cofactor.

It is found in the cytoplasm. Its subcellular location is the cytoskeleton. Its function is as follows. Tubulin is the major constituent of microtubules, a cylinder consisting of laterally associated linear protofilaments composed of alpha- and beta-tubulin heterodimers. Microtubules grow by the addition of GTP-tubulin dimers to the microtubule end, where a stabilizing cap forms. Below the cap, tubulin dimers are in GDP-bound state, owing to GTPase activity of alpha-tubulin. The protein is Tubulin beta-2 chain (TUBB2) of Pisum sativum (Garden pea).